The sequence spans 362 residues: Chorismate synthase (362 aa).

The NADP(+) site is built by Arg48 and Arg54. Residues 125–127, 238–239, Gly286, 301–305, and Arg327 each bind FMN; these read RSS, NA, and KPTSS.

This sequence belongs to the chorismate synthase family. Homotetramer. The cofactor is FMNH2.

It catalyses the reaction 5-O-(1-carboxyvinyl)-3-phosphoshikimate = chorismate + phosphate. Its pathway is metabolic intermediate biosynthesis; chorismate biosynthesis; chorismate from D-erythrose 4-phosphate and phosphoenolpyruvate: step 7/7. Its function is as follows. Catalyzes the anti-1,4-elimination of the C-3 phosphate and the C-6 proR hydrogen from 5-enolpyruvylshikimate-3-phosphate (EPSP) to yield chorismate, which is the branch point compound that serves as the starting substrate for the three terminal pathways of aromatic amino acid biosynthesis. This reaction introduces a second double bond into the aromatic ring system. This Granulibacter bethesdensis (strain ATCC BAA-1260 / CGDNIH1) protein is Chorismate synthase.